A 104-amino-acid chain; its full sequence is Cysteine-rich and transmembrane domain-containing protein 1 (104 aa).

Pro residues-rich tracts occupy residues 1–25 (MNPE…PQQP) and 33–47 (GAPP…PPQG). Residues 1–47 (MNPENPPPYPGPGPTAPYPPYPQQPMGPMGPMGAPPPQGYPYPPPQG) are disordered. Residues 81–98 (LGPSTCLTACWTALCCCC) form a helical membrane-spanning segment.

It belongs to the CYSTM1 family.

Its subcellular location is the membrane. The polypeptide is Cysteine-rich and transmembrane domain-containing protein 1 (Cystm1) (Mus musculus (Mouse)).